Reading from the N-terminus, the 308-residue chain is MGNVVYKLTSKEIQSLMAQTTFETTKLPQGMKARTRYQNTVINIYSSGKVMFQGKNADQLASQLLPDKQSTTGKHTSSNTTSIQYNRFHCIGSDEAGSGDYFGPLTVCAAYVSQSHIKILKELGVDDSKKLNDTKIVDLAEQLITFIPHSLLTLDNVKYNERQSIGWSQVKMKAVLHNEAIKNVLQKIEQDQLDYIVIDQFAKREVYQHYALSALPFPDKTKFETKGESKSLAIAVASIISRYAFVKHMDHISKKLHMEIPKGASNKVDLIAAKVIQKYDIQQLDTISKKHFKNRDKAIHLMNQKYNK.

The RNase H type-2 domain maps to 88–304 (FHCIGSDEAG…RDKAIHLMNQ (217 aa)). A divalent metal cation is bound by residues Asp-94, Glu-95, and Asp-199.

This sequence belongs to the RNase HII family. RnhC subfamily. The cofactor is Mn(2+). Mg(2+) serves as cofactor.

Its subcellular location is the cytoplasm. The enzyme catalyses Endonucleolytic cleavage to 5'-phosphomonoester.. Its function is as follows. Endonuclease that specifically degrades the RNA of RNA-DNA hybrids. This chain is Ribonuclease HIII, found in Staphylococcus epidermidis (strain ATCC 12228 / FDA PCI 1200).